We begin with the raw amino-acid sequence, 856 residues long: Leucine--tRNA ligase (856 aa).

Positions 53–63 match the 'HIGH' region motif; it reads PYPSGNLHMGH. A 'KMSKS' region motif is present at residues 622 to 626; sequence KMSKS. Position 625 (Lys-625) interacts with ATP.

The protein belongs to the class-I aminoacyl-tRNA synthetase family.

The protein localises to the cytoplasm. It catalyses the reaction tRNA(Leu) + L-leucine + ATP = L-leucyl-tRNA(Leu) + AMP + diphosphate. This Prochlorococcus marinus (strain MIT 9312) protein is Leucine--tRNA ligase.